Here is a 192-residue protein sequence, read N- to C-terminus: Ethylene-responsive transcription factor ERF027 (192 aa).

A DNA-binding region (AP2/ERF) is located at residues 18-74 (VYRGIRCRSGKWVSEIREPRKTTRIWLGTYPMAEMAAAAYDVAAMALKGREAVLNFP). Disordered stretches follow at residues 104 to 132 (CEEGEEEKKAKEKKSSSSKSRARECHVDN) and 167 to 192 (APPSWMGSRPSDDSPENSNDEDLWGY). Over residues 179 to 192 (DSPENSNDEDLWGY) the composition is skewed to acidic residues.

The protein belongs to the AP2/ERF transcription factor family. ERF subfamily.

The protein resides in the nucleus. In terms of biological role, probably acts as a transcriptional activator. Binds to the GCC-box pathogenesis-related promoter element. May be involved in the regulation of gene expression by stress factors and by components of stress signal transduction pathways. The sequence is that of Ethylene-responsive transcription factor ERF027 (ERF027) from Arabidopsis thaliana (Mouse-ear cress).